Here is a 336-residue protein sequence, read N- to C-terminus: Abasic site processing protein HMCES (336 aa).

Cys-2 acts as the Nucleophile in catalysis. At Cys-2 the chain carries Thiazolidine linkage to a ring-opened DNA abasic site. Positions 29 to 38 are enriched in basic and acidic residues; that stretch reads QPEWLREGRY. The tract at residues 29–52 is disordered; the sequence is QPEWLREGRYRPSYNKGPQSSGPV. Glu-127 is an active-site residue. Residues 283–336 form a disordered region; that stretch reads LKSSQEGSPQKKEDTLPRWKSQFIHSPSPKKSSAGILRQWLGQEGGPPAKKQKA.

The protein belongs to the SOS response-associated peptidase family.

Its subcellular location is the chromosome. Its activity is regulated as follows. Formation and reversal of DNA-protein cross-link depends on DNA context. Catalyzes formation of the thiazolidine linkage in presence of abasic sites in single-stranded DNA. Mediates the reversal of the thiazolidine cross-link in presence of double stranded DNA. Its function is as follows. Sensor of abasic sites in single-stranded DNA (ssDNA) required to preserve genome integrity by promoting error-free repair of abasic sites. Acts as an enzyme that recognizes and binds abasic sites in ssDNA at replication forks and chemically modifies the lesion by forming a covalent cross-link with DNA: forms a stable thiazolidine linkage between a ring-opened abasic site and the alpha-amino and sulfhydryl substituents of its N-terminal catalytic cysteine residue. The HMCES DNA-protein cross-link is then either reversed or degraded. HMCES is able to catalyze the reversal of its thiazolidine cross-link and cycle between a cross-link and a non-cross-linked state depending on DNA context: mediates self-reversal of the thiazolidine cross-link in double stranded DNA, allowing APEX1 to initiate downstream repair of abasic sites. The HMCES DNA-protein cross-link can also be degraded by the SPRTN metalloprotease following unfolding by the BRIP1/FANCJ helicase. Promotes error-free repair of abasic sites by protecting abasic sites from translesion synthesis (TLS) polymerases and endonucleases that are error-prone and would generate mutations and double-strand breaks. Acts as a protease: mediates autocatalytic processing of its N-terminal methionine in order to expose the catalytic cysteine. The HMCES DNA-protein cross-link is then either reversed or degraded. According to a model, the HMCES DNA-protein cross-link. This is Abasic site processing protein HMCES from Gallus gallus (Chicken).